A 140-amino-acid chain; its full sequence is Small ribosomal subunit protein uS12 (140 aa).

The interval Lys-33–Pro-55 is disordered.

It belongs to the universal ribosomal protein uS12 family. As to quaternary structure, part of the 30S ribosomal subunit. Contacts proteins S8 and S17. May interact with IF1 in the 30S initiation complex.

Its function is as follows. With S4 and S5 plays an important role in translational accuracy. Interacts with and stabilizes bases of the 16S rRNA that are involved in tRNA selection in the A site and with the mRNA backbone. Located at the interface of the 30S and 50S subunits, it traverses the body of the 30S subunit contacting proteins on the other side and probably holding the rRNA structure together. The combined cluster of proteins S8, S12 and S17 appears to hold together the shoulder and platform of the 30S subunit. The chain is Small ribosomal subunit protein uS12 from Geobacillus kaustophilus (strain HTA426).